A 421-amino-acid polypeptide reads, in one-letter code: ATP-dependent RNA helicase RhlB (421 aa).

The Q motif signature appears at 9–37; it reads QKFSDFSLHPKVVEALEKKGFHNCTPIQA. A Helicase ATP-binding domain is found at 40-219; it reads LPLTLAGRDV…FEQMNNAEYI (180 aa). Residue 53 to 60 coordinates ATP; it reads AQTGTGKT. Positions 165–168 match the DEAD box motif; sequence DEAD. A Helicase C-terminal domain is found at 245–390; sequence RLLQTLIEEE…VSKYNPDALM (146 aa). The interval 392–421 is disordered; the sequence is DLPKPLRLTRPRTGNGPRRTGAPRNRRRSG. Low complexity predominate over residues 402–414; sequence PRTGNGPRRTGAP.

This sequence belongs to the DEAD box helicase family. RhlB subfamily. Component of the RNA degradosome, which is a multiprotein complex involved in RNA processing and mRNA degradation.

The protein resides in the cytoplasm. The catalysed reaction is ATP + H2O = ADP + phosphate + H(+). DEAD-box RNA helicase involved in RNA degradation. Has RNA-dependent ATPase activity and unwinds double-stranded RNA. This chain is ATP-dependent RNA helicase RhlB, found in Shigella dysenteriae serotype 1 (strain Sd197).